A 418-amino-acid polypeptide reads, in one-letter code: Glutamyl-tRNA reductase (418 aa).

Substrate contacts are provided by residues 49–52 (TCNR), Ser-109, 114–116 (EPQ), and Gln-120. Catalysis depends on Cys-50, which acts as the Nucleophile. 189 to 194 (GAGETI) serves as a coordination point for NADP(+).

Belongs to the glutamyl-tRNA reductase family. Homodimer.

It catalyses the reaction (S)-4-amino-5-oxopentanoate + tRNA(Glu) + NADP(+) = L-glutamyl-tRNA(Glu) + NADPH + H(+). It functions in the pathway porphyrin-containing compound metabolism; protoporphyrin-IX biosynthesis; 5-aminolevulinate from L-glutamyl-tRNA(Glu): step 1/2. Catalyzes the NADPH-dependent reduction of glutamyl-tRNA(Glu) to glutamate 1-semialdehyde (GSA). In Cronobacter sakazakii (strain ATCC BAA-894) (Enterobacter sakazakii), this protein is Glutamyl-tRNA reductase.